The following is a 225-amino-acid chain: Uridylate kinase (225 aa).

Residue 9-10 coordinates ATP; it reads GS. Gly-46 is a UMP binding site. 2 residues coordinate ATP: Gly-47 and Arg-51. UMP contacts are provided by residues Asp-67 and 115-121; that span reads THPAHTT. 4 residues coordinate ATP: Thr-141, Asn-142, Tyr-147, and Asp-150.

It belongs to the UMP kinase family. In terms of assembly, homohexamer.

It localises to the cytoplasm. The catalysed reaction is UMP + ATP = UDP + ADP. The protein operates within pyrimidine metabolism; CTP biosynthesis via de novo pathway; UDP from UMP (UMPK route): step 1/1. With respect to regulation, inhibited by UTP. Catalyzes the reversible phosphorylation of UMP to UDP. The polypeptide is Uridylate kinase (Methanococcus vannielii (strain ATCC 35089 / DSM 1224 / JCM 13029 / OCM 148 / SB)).